The sequence spans 308 residues: F-actin-capping protein subunit alpha (308 aa).

The protein belongs to the F-actin-capping protein alpha subunit family. As to quaternary structure, component of the F-actin capping complex, composed of a heterodimer of an alpha and a beta subunit.

Its function is as follows. F-actin-capping proteins bind in a Ca(2+)-independent manner to the fast growing ends of actin filaments (barbed end) thereby blocking the exchange of subunits at these ends. Unlike other capping proteins (such as gelsolin and severin), these proteins do not sever actin filaments. The chain is F-actin-capping protein subunit alpha from Arabidopsis thaliana (Mouse-ear cress).